The primary structure comprises 392 residues: 5-azacytidine-induced protein 2 (392 aa).

A homodimerization region spans residues 1 to 197; the sequence is MDALVEDDIC…IELQKAKQTD (197 aa). Coiled coils occupy residues 40–76 and 102–196; these read ALVT…LIAR and DRDN…AKQT. The interaction with TBK1 and IKBKE stretch occupies residues 216 to 257; the sequence is SDNMQHAYWELKREMSNLHLVTQVQAELLRKLKTSTAIKKAC. Residues S318 and S353 each carry the phosphoserine modification.

In terms of assembly, homodimer. Interacts with IKBKE. Interacts with TBK1. Interacts with TICAM1. Interacts with TAX1BP1. Interacts with CALCOCO2. As to quaternary structure, (Microbial infection) Interacts with vaccinia virus protein C6. Post-translationally, ubiquitinated via 'Lys-48'-linked polyubiquitination by TRIM38, leading to its degradation. Widely expressed. Abundant expression seen in the pancreas and testis.

The protein localises to the cytoplasm. Functionally, adapter protein which binds TBK1 and IKBKE playing a role in antiviral innate immunity. Activates serine/threonine-protein kinase TBK1 and facilitates its oligomerization. Enhances the phosphorylation of NF-kappa-B p65 subunit RELA by TBK1. Promotes TBK1-induced as well as TNF-alpha or PMA-induced activation of NF-kappa-B. Participates in IFNB promoter activation via TICAM1. This chain is 5-azacytidine-induced protein 2 (AZI2), found in Homo sapiens (Human).